Reading from the N-terminus, the 184-residue chain is UPF0398 protein BCB4264_A1614 (184 aa).

The protein belongs to the UPF0398 family.

This chain is UPF0398 protein BCB4264_A1614, found in Bacillus cereus (strain B4264).